The chain runs to 467 residues: ATP synthase subunit beta, sodium ion specific (467 aa).

151-158 (GGAGVGKT) serves as a coordination point for ATP.

Belongs to the ATPase alpha/beta chains family. F-type ATPases have 2 components, CF(1) - the catalytic core - and CF(0) - the membrane proton channel. CF(1) has five subunits: alpha(3), beta(3), gamma(1), delta(1), epsilon(1). CF(0) has three main subunits: a, b and c.

The protein localises to the cell membrane. It carries out the reaction 4 Na(+)(in) + ATP + H2O = 4 Na(+)(out) + ADP + phosphate + H(+). Functionally, produces ATP from ADP in the presence of a sodium ion gradient across the membrane. The beta chain is the catalytic subunit. In Propionigenium modestum, this protein is ATP synthase subunit beta, sodium ion specific.